The primary structure comprises 440 residues: tRNA-2-methylthio-N(6)-dimethylallyladenosine synthase (440 aa).

The MTTase N-terminal domain maps to Asn-7–Ser-123. Cys-16, Cys-52, Cys-86, Cys-159, Cys-163, and Cys-166 together coordinate [4Fe-4S] cluster. In terms of domain architecture, Radical SAM core spans Arg-145–Glu-375. The 63-residue stretch at Gln-378 to Val-440 folds into the TRAM domain.

It belongs to the methylthiotransferase family. MiaB subfamily. As to quaternary structure, monomer. [4Fe-4S] cluster serves as cofactor.

It localises to the cytoplasm. The catalysed reaction is N(6)-dimethylallyladenosine(37) in tRNA + (sulfur carrier)-SH + AH2 + 2 S-adenosyl-L-methionine = 2-methylsulfanyl-N(6)-dimethylallyladenosine(37) in tRNA + (sulfur carrier)-H + 5'-deoxyadenosine + L-methionine + A + S-adenosyl-L-homocysteine + 2 H(+). Functionally, catalyzes the methylthiolation of N6-(dimethylallyl)adenosine (i(6)A), leading to the formation of 2-methylthio-N6-(dimethylallyl)adenosine (ms(2)i(6)A) at position 37 in tRNAs that read codons beginning with uridine. The sequence is that of tRNA-2-methylthio-N(6)-dimethylallyladenosine synthase from Pelodictyon phaeoclathratiforme (strain DSM 5477 / BU-1).